The following is a 683-amino-acid chain: Methionine--tRNA ligase (683 aa).

The 'HIGH' region signature appears at 15–25 (PYANGPIHLGH). The Zn(2+) site is built by cysteine 146, cysteine 149, cysteine 159, and cysteine 162. The 'KMSKS' region signature appears at 332 to 336 (KMSKS). Lysine 335 provides a ligand contact to ATP. One can recognise a tRNA-binding domain in the interval 581 to 683 (DFFKVDLRVA…AGAKAGQRVK (103 aa)).

The protein belongs to the class-I aminoacyl-tRNA synthetase family. MetG type 1 subfamily. In terms of assembly, homodimer. Requires Zn(2+) as cofactor.

It is found in the cytoplasm. The catalysed reaction is tRNA(Met) + L-methionine + ATP = L-methionyl-tRNA(Met) + AMP + diphosphate. Its function is as follows. Is required not only for elongation of protein synthesis but also for the initiation of all mRNA translation through initiator tRNA(fMet) aminoacylation. In Histophilus somni (strain 129Pt) (Haemophilus somnus), this protein is Methionine--tRNA ligase.